The sequence spans 244 residues: Phosphoadenosine 5'-phosphosulfate reductase (244 aa).

The active-site Nucleophile; cysteine thiosulfonate intermediate is the C239.

This sequence belongs to the PAPS reductase family. CysH subfamily.

It localises to the cytoplasm. It catalyses the reaction [thioredoxin]-disulfide + sulfite + adenosine 3',5'-bisphosphate + 2 H(+) = [thioredoxin]-dithiol + 3'-phosphoadenylyl sulfate. It participates in sulfur metabolism; hydrogen sulfide biosynthesis; sulfite from sulfate: step 3/3. Its function is as follows. Catalyzes the formation of sulfite from phosphoadenosine 5'-phosphosulfate (PAPS) using thioredoxin as an electron donor. In Citrobacter koseri (strain ATCC BAA-895 / CDC 4225-83 / SGSC4696), this protein is Phosphoadenosine 5'-phosphosulfate reductase.